The following is a 425-amino-acid chain: Glutamyl-tRNA reductase (425 aa).

Residues 49–52, serine 107, 112–114, and glutamine 118 each bind substrate; these read TCNR and EPQ. The active-site Nucleophile is the cysteine 50. Position 187-192 (187-192) interacts with NADP(+); sequence GAGETI.

The protein belongs to the glutamyl-tRNA reductase family. As to quaternary structure, homodimer.

It carries out the reaction (S)-4-amino-5-oxopentanoate + tRNA(Glu) + NADP(+) = L-glutamyl-tRNA(Glu) + NADPH + H(+). Its pathway is porphyrin-containing compound metabolism; protoporphyrin-IX biosynthesis; 5-aminolevulinate from L-glutamyl-tRNA(Glu): step 1/2. In terms of biological role, catalyzes the NADPH-dependent reduction of glutamyl-tRNA(Glu) to glutamate 1-semialdehyde (GSA). This Pseudomonas putida (strain ATCC 700007 / DSM 6899 / JCM 31910 / BCRC 17059 / LMG 24140 / F1) protein is Glutamyl-tRNA reductase.